The chain runs to 792 residues: Xaa-Pro dipeptidyl-peptidase (792 aa).

Active-site charge relay system residues include Ser363, Asp482, and His513.

It belongs to the peptidase S15 family. Homodimer.

It is found in the cytoplasm. The catalysed reaction is Hydrolyzes Xaa-Pro-|- bonds to release unblocked, N-terminal dipeptides from substrates including Ala-Pro-|-p-nitroanilide and (sequentially) Tyr-Pro-|-Phe-Pro-|-Gly-Pro-|-Ile.. Removes N-terminal dipeptides sequentially from polypeptides having unsubstituted N-termini provided that the penultimate residue is proline. The protein is Xaa-Pro dipeptidyl-peptidase of Lactobacillus delbrueckii subsp. bulgaricus (strain ATCC 11842 / DSM 20081 / BCRC 10696 / JCM 1002 / NBRC 13953 / NCIMB 11778 / NCTC 12712 / WDCM 00102 / Lb 14).